The chain runs to 387 residues: Acyl-[acyl-carrier-protein] 6-desaturase (387 aa).

A chloroplast-targeting transit peptide spans 1-29; the sequence is MALVFKSIGAHKTPPCTLNLASPALYHTR. The Fe cation site is built by Glu131, Glu169, His172, Glu222, Glu255, and His258.

It belongs to the fatty acid desaturase type 2 family. The cofactor is Fe(2+).

It localises to the plastid. It is found in the chloroplast. The enzyme catalyses hexadecanoyl-[ACP] + 2 reduced [2Fe-2S]-[ferredoxin] + O2 + 2 H(+) = (6Z)-hexadecenoyl-[ACP] + 2 oxidized [2Fe-2S]-[ferredoxin] + 2 H2O. Its pathway is lipid metabolism; fatty acid metabolism. With respect to regulation, inhibited by KCN or H(2)O(2). Functionally, delta(6) fatty acid desaturase introducing a cis double bond at carbon 6 of palmitoyl-[acyl-carrier protein](16:0-ACP), producing 16:1(6Z)-ACP. No activity with the coenzyme A ester of the fatty acid. The position of the double bond is determined by its distance from the carboxyl end of the fatty acid. Low activity with several saturated acyl-[acyl-carrier protein]s, including 14:0-ACP and 18:0-ACP. Requires reduced ferredoxin for detectable in vitro activity. This is Acyl-[acyl-carrier-protein] 6-desaturase from Thunbergia alata (Black-eyed Susan vine).